A 135-amino-acid polypeptide reads, in one-letter code: MASGGGGGSKRCPKKQPTPEELAEELVKLRMENKALKSKLKEHVGDDDVVLTQAAKEAMVGSVVSGLTRSAAKQIEERIRKETLKATTKNEFEEVIKTLSFRVSLSYADLGGRASSDSSKASKPRGRSKHRAEKQ.

2 disordered regions span residues 1-20 and 110-135; these read MASGGGGGSKRCPKKQPTPE and LGGRASSDSSKASKPRGRSKHRAEKQ. A compositionally biased stretch (basic residues) spans 122–135; it reads SKPRGRSKHRAEKQ.

It belongs to the herpesviridae BLRF2 family.

The protein is Gene 52 protein (52) of Equine herpesvirus 2 (strain 86/87) (EHV-2).